The chain runs to 319 residues: Transaldolase (319 aa).

Residue Lys126 is the Schiff-base intermediate with substrate of the active site.

The protein belongs to the transaldolase family. Type 1 subfamily. As to quaternary structure, homodimer.

The protein localises to the cytoplasm. The enzyme catalyses D-sedoheptulose 7-phosphate + D-glyceraldehyde 3-phosphate = D-erythrose 4-phosphate + beta-D-fructose 6-phosphate. It functions in the pathway carbohydrate degradation; pentose phosphate pathway; D-glyceraldehyde 3-phosphate and beta-D-fructose 6-phosphate from D-ribose 5-phosphate and D-xylulose 5-phosphate (non-oxidative stage): step 2/3. In terms of biological role, transaldolase is important for the balance of metabolites in the pentose-phosphate pathway. The sequence is that of Transaldolase from Bordetella petrii (strain ATCC BAA-461 / DSM 12804 / CCUG 43448).